The primary structure comprises 141 residues: Putative pre-16S rRNA nuclease (141 aa).

The protein belongs to the YqgF nuclease family.

It is found in the cytoplasm. Functionally, could be a nuclease involved in processing of the 5'-end of pre-16S rRNA. This Sodalis glossinidius (strain morsitans) protein is Putative pre-16S rRNA nuclease.